A 176-amino-acid polypeptide reads, in one-letter code: Protein singles bar (176 aa).

4 consecutive transmembrane segments (helical) span residues 13 to 35 (LGIRICCCRVCTCINFGFVLSRI), 71 to 91 (FLATTGHCFTTTGILLLCYAF), 111 to 131 (LASCMYFSSSSYMGFACVVWL), and 140 to 160 (GFWAYPAMTACYYMGYAAGIL). The region spanning 30-173 (FVLSRIGLLK…DAYLAFRHFR (144 aa)) is the MARVEL domain.

It localises to the membrane. Its function is as follows. Essential for myoblast fusion in developing embryos and pupae, and consequently is essential for muscle formation in adults. Required for progression past the pre-fusion complex stage of myoblast fusion. This Drosophila melanogaster (Fruit fly) protein is Protein singles bar.